A 147-amino-acid polypeptide reads, in one-letter code: MADFDAVLKCWGPVEADYTTIGGLVLTRLFKEHPETQKLFPKFAGIAQADIAGNAAVSAHGATVLKKLGELLKAKGSHAAILKPLANSHATKHKIPINNFKLISEVLVKVMHEKAGLDAGGQTALRNVMGIIIADLEANYKELGFSG.

In terms of domain architecture, Globin spans 2–141 (ADFDAVLKCW…IIADLEANYK (140 aa)). Position 60 (His60) interacts with nitrite. His60 contributes to the O2 binding site. His89 contacts heme b.

This sequence belongs to the globin family. In terms of assembly, monomeric.

Its subcellular location is the cytoplasm. It localises to the sarcoplasm. It catalyses the reaction Fe(III)-heme b-[protein] + nitric oxide + H2O = Fe(II)-heme b-[protein] + nitrite + 2 H(+). The enzyme catalyses H2O2 + AH2 = A + 2 H2O. In terms of biological role, monomeric heme protein which primary function is to store oxygen and facilitate its diffusion within muscle tissues. Reversibly binds oxygen through a pentacoordinated heme iron and enables its timely and efficient release as needed during periods of heightened demand. Depending on the oxidative conditions of tissues and cells, and in addition to its ability to bind oxygen, it also has a nitrite reductase activity whereby it regulates the production of bioactive nitric oxide. Under stress conditions, like hypoxia and anoxia, it also protects cells against reactive oxygen species thanks to its pseudoperoxidase activity. In Thunnus obesus (Bigeye tuna), this protein is Myoglobin (mb).